Consider the following 766-residue polypeptide: 1,4-alpha-glucan branching enzyme GlgB (766 aa).

D431 functions as the Nucleophile in the catalytic mechanism. E484 serves as the catalytic Proton donor.

Belongs to the glycosyl hydrolase 13 family. GlgB subfamily. Monomer.

The catalysed reaction is Transfers a segment of a (1-&gt;4)-alpha-D-glucan chain to a primary hydroxy group in a similar glucan chain.. Its pathway is glycan biosynthesis; glycogen biosynthesis. Its function is as follows. Catalyzes the formation of the alpha-1,6-glucosidic linkages in glycogen by scission of a 1,4-alpha-linked oligosaccharide from growing alpha-1,4-glucan chains and the subsequent attachment of the oligosaccharide to the alpha-1,6 position. This Thermosynechococcus vestitus (strain NIES-2133 / IAM M-273 / BP-1) protein is 1,4-alpha-glucan branching enzyme GlgB.